Consider the following 371-residue polypeptide: Glutamate 5-kinase (371 aa).

Residue lysine 14 coordinates ATP. Substrate is bound by residues serine 52, aspartate 139, and asparagine 151. 171 to 172 (SD) is an ATP binding site. The PUA domain maps to 275–353 (EGRLHLDSGA…ADLAMELGPS (79 aa)).

It belongs to the glutamate 5-kinase family.

It is found in the cytoplasm. The enzyme catalyses L-glutamate + ATP = L-glutamyl 5-phosphate + ADP. The protein operates within amino-acid biosynthesis; L-proline biosynthesis; L-glutamate 5-semialdehyde from L-glutamate: step 1/2. Functionally, catalyzes the transfer of a phosphate group to glutamate to form L-glutamate 5-phosphate. The chain is Glutamate 5-kinase from Frankia casuarinae (strain DSM 45818 / CECT 9043 / HFP020203 / CcI3).